A 725-amino-acid chain; its full sequence is ABC transporter G family member 19 (725 aa).

The 253-residue stretch at Leu-73–Glu-325 folds into the ABC transporter domain. Position 117 to 124 (Gly-117 to Ser-124) interacts with ATP. The 211-residue stretch at Phe-419–Phe-629 folds into the ABC transmembrane type-2 domain. 7 helical membrane passes run Leu-438–Trp-458, Leu-473–Ile-493, Ile-515–Ile-535, Phe-537–Tyr-557, Ile-577–Phe-597, Phe-606–Ile-626, and Leu-698–Phe-718.

It belongs to the ABC transporter superfamily. ABCG family. Eye pigment precursor importer (TC 3.A.1.204) subfamily.

The protein localises to the vacuole membrane. Its function is as follows. Confers selective resistance to kanamycin. The protein is ABC transporter G family member 19 (ABCG19) of Arabidopsis thaliana (Mouse-ear cress).